The primary structure comprises 432 residues: Enolase (432 aa).

Gln-166 contributes to the (2R)-2-phosphoglycerate binding site. The Proton donor role is filled by Glu-210. Asp-247, Glu-288, and Asp-315 together coordinate Mg(2+). Residues Lys-340, Arg-369, Ser-370, and Lys-391 each coordinate (2R)-2-phosphoglycerate. Lys-340 (proton acceptor) is an active-site residue.

It belongs to the enolase family. Mg(2+) is required as a cofactor.

It is found in the cytoplasm. It localises to the secreted. The protein resides in the cell surface. It catalyses the reaction (2R)-2-phosphoglycerate = phosphoenolpyruvate + H2O. It participates in carbohydrate degradation; glycolysis; pyruvate from D-glyceraldehyde 3-phosphate: step 4/5. Functionally, catalyzes the reversible conversion of 2-phosphoglycerate (2-PG) into phosphoenolpyruvate (PEP). It is essential for the degradation of carbohydrates via glycolysis. This Aeropyrum pernix (strain ATCC 700893 / DSM 11879 / JCM 9820 / NBRC 100138 / K1) protein is Enolase.